A 213-amino-acid chain; its full sequence is Cytochrome c biogenesis ATP-binding export protein CcmA (213 aa).

An ABC transporter domain is found at 11-213 (LTARNLECIR…TVTVHHLVLS (203 aa)). Position 43–50 (43–50 (GPNGSGKT)) interacts with ATP.

The protein belongs to the ABC transporter superfamily. CcmA exporter (TC 3.A.1.107) family. In terms of assembly, the complex is composed of two ATP-binding proteins (CcmA) and two transmembrane proteins (CcmB).

It is found in the cell inner membrane. It catalyses the reaction heme b(in) + ATP + H2O = heme b(out) + ADP + phosphate + H(+). Its function is as follows. Part of the ABC transporter complex CcmAB involved in the biogenesis of c-type cytochromes; once thought to export heme, this seems not to be the case, but its exact role is uncertain. Responsible for energy coupling to the transport system. The protein is Cytochrome c biogenesis ATP-binding export protein CcmA of Nitrosomonas europaea (strain ATCC 19718 / CIP 103999 / KCTC 2705 / NBRC 14298).